Consider the following 353-residue polypeptide: Photosystem II D2 protein (353 aa).

The residue at position 2 (threonine 2) is an N-acetylthreonine. At threonine 2 the chain carries Phosphothreonine. A helical membrane pass occupies residues 41-61 (CAYFALGGWFTGTTFVTSWYT). Histidine 118 is a chlorophyll a binding site. Residues 125-141 (GFMLRQFELARSVQLRP) form a helical membrane-spanning segment. 2 residues coordinate pheophytin a: glutamine 130 and asparagine 143. A helical membrane pass occupies residues 153-166 (VFVSVFLIYPLGQS). Histidine 198 is a chlorophyll a binding site. Residues 208–228 (AALLCAIHGATVENTLFEDGD) traverse the membrane as a helical segment. A plastoquinone contacts are provided by histidine 215 and phenylalanine 262. Histidine 215 is a Fe cation binding site. Position 269 (histidine 269) interacts with Fe cation. A helical membrane pass occupies residues 279–295 (GLWMSAIGVVGLALNLR).

This sequence belongs to the reaction center PufL/M/PsbA/D family. As to quaternary structure, PSII is composed of 1 copy each of membrane proteins PsbA, PsbB, PsbC, PsbD, PsbE, PsbF, PsbH, PsbI, PsbJ, PsbK, PsbL, PsbM, PsbT, PsbX, PsbY, PsbZ, Psb30/Ycf12, at least 3 peripheral proteins of the oxygen-evolving complex and a large number of cofactors. It forms dimeric complexes. It depends on The D1/D2 heterodimer binds P680, chlorophylls that are the primary electron donor of PSII, and subsequent electron acceptors. It shares a non-heme iron and each subunit binds pheophytin, quinone, additional chlorophylls, carotenoids and lipids. There is also a Cl(-1) ion associated with D1 and D2, which is required for oxygen evolution. The PSII complex binds additional chlorophylls, carotenoids and specific lipids. as a cofactor.

It is found in the plastid. It localises to the chloroplast thylakoid membrane. The enzyme catalyses 2 a plastoquinone + 4 hnu + 2 H2O = 2 a plastoquinol + O2. Photosystem II (PSII) is a light-driven water:plastoquinone oxidoreductase that uses light energy to abstract electrons from H(2)O, generating O(2) and a proton gradient subsequently used for ATP formation. It consists of a core antenna complex that captures photons, and an electron transfer chain that converts photonic excitation into a charge separation. The D1/D2 (PsbA/PsbD) reaction center heterodimer binds P680, the primary electron donor of PSII as well as several subsequent electron acceptors. D2 is needed for assembly of a stable PSII complex. This Lolium perenne (Perennial ryegrass) protein is Photosystem II D2 protein.